Reading from the N-terminus, the 944-residue chain is Calcium-transporting ATPase type 2C member 2 (944 aa).

Residues 1 to 104 (MGRRFKFLQK…DNTEPVWKKY (104 aa)) lie on the Cytoplasmic side of the membrane. The interval 69 to 93 (VDLDSGLSEFAVAQRRLVHGWNEFV) is interaction with ORAI1. A helical transmembrane segment spans residues 105–125 (LDQFRNPLILLLLGSSVVSVL). Over 126-127 (TK) the chain is Extracellular. The helical transmembrane segment at 128-148 (EYEDAISIALAVLIVVTVGFI) threads the bilayer. The Cytoplasmic segment spans residues 149-229 (QEYRSEKSLE…EVEPCSKTDS (81 aa)). The helical transmembrane segment at 230–250 (PLAGGGDLSTLSNVVFMGTLV) threads the bilayer. The Extracellular segment spans residues 251–291 (QCGKGQGVVIGTGEQSQFGEVFKMMRAEETPKTPLQKSMDK). Thr-262 is modified (phosphothreonine). Residue Ser-266 is modified to Phosphoserine. Residues 292–312 (LGKQLTVFSFGIIGLLMLVGW) traverse the membrane as a helical segment. Residues 313–329 (VQGKPLLSMFTIGVSLA) are Cytoplasmic-facing. Positions 330, 331, 333, and 335 each coordinate Ca(2+). A helical transmembrane segment spans residues 330–350 (VAAIPEGLPIVVMVTLVLGVL). Residues 351 to 748 (RMAKKRVIVK…IAALSLITLS (398 aa)) lie on the Extracellular side of the membrane. Asp-377 functions as the 4-aspartylphosphate intermediate in the catalytic mechanism. Mg(2+)-binding residues include Asp-672 and Asp-676. The chain crosses the membrane as a helical span at residues 749 to 769 (TVCNLPNPLNAMQILWVNIIM). Ca(2+)-binding residues include Asn-766 and Asp-770. Over 770 to 802 (DGPPAQSLGVEPVDRDALKRPPRSVKDTILNRA) the chain is Cytoplasmic. The helical transmembrane segment at 803–823 (LILKILMSAAVILGGTLFIFW) threads the bilayer. Over 824–835 (REIPENRTSTPR) the chain is Extracellular. A helical membrane pass occupies residues 836-853 (TTTMAFTCFVFFDLFNAL). Residues 854–872 (SCRSQTKLIFEIGFFRNRM) are Cytoplasmic-facing. Residues 873–893 (FLYSILGSLLGQLAVIYAPPL) form a helical membrane-spanning segment. The Extracellular portion of the chain corresponds to 894 to 903 (QKVFQTENLS). The helical transmembrane segment at 904 to 924 (ALDLLLLTGLASSVFILSELL) threads the bilayer. At 925 to 944 (KLCEKFCSRAKADQMLPEAV) the chain is on the cytoplasmic side.

This sequence belongs to the cation transport ATPase (P-type) (TC 3.A.3) family. Type IIA subfamily. In terms of assembly, interacts (via N-terminus) with ORAI1 (via N- and C-termini); this interaction regulates Ca(2+) influx at the plasma membrane.

The protein localises to the golgi apparatus. Its subcellular location is the trans-Golgi network membrane. It is found in the cell membrane. It localises to the basolateral cell membrane. The catalysed reaction is Ca(2+)(in) + ATP + H2O = Ca(2+)(out) + ADP + phosphate + H(+). It carries out the reaction Mn(2+)(in) + ATP + H2O = Mn(2+)(out) + ADP + phosphate + H(+). ATP-driven pump that supplies the Golgi apparatus with Ca(2+) and Mn(2+) ions, both essential cofactors for processing and trafficking of newly synthesized proteins in the secretory pathway. Within a catalytic cycle, acquires Ca(2+) or Mn(2+) ions on the cytoplasmic side of the membrane and delivers them to the lumenal side. The transfer of ions across the membrane is coupled to ATP hydrolysis and is associated with a transient phosphorylation that shifts the pump conformation from inward-facing to outward-facing state. Induces Ca(2+) influx independently of its ATP-driven pump function. At the basolateral membrane of mammary epithelial cells, interacts with Ca(2+) channel ORAI1 and mediates Ca(2+) entry independently of the Ca(2+) content of endoplasmic reticulum or Golgi stores. May facilitate transepithelial transport of large quantities of Ca(2+) for milk secretion via activation of Ca(2+) influx channels at the plasma membrane and active Ca(2+) transport at the Golgi apparatus. The protein is Calcium-transporting ATPase type 2C member 2 (Atp2c2) of Rattus norvegicus (Rat).